The sequence spans 333 residues: Galactinol synthase 1 (333 aa).

K104 is a catalytic residue. 3 residues coordinate Mn(2+): D120, D122, and H257.

The protein belongs to the glycosyltransferase 8 family. Galactosyltransferase subfamily. A divalent metal cation serves as cofactor. Expressed in source leaves, specifically in the mesophyll.

It is found in the cytoplasm. The enzyme catalyses myo-inositol + UDP-alpha-D-galactose = alpha-D-galactosyl-(1-&gt;3)-1D-myo-inositol + UDP + H(+). In terms of biological role, major galactinol synthase mainly involved in the biosynthesis of storage raffinose family oligosaccharides (RFOs) that function as osmoprotectants. May promote plant stress tolerance. This Ajuga reptans (Bugle) protein is Galactinol synthase 1 (GOLS1).